We begin with the raw amino-acid sequence, 262 residues long: MSGPAGLAYLDRRERVLKLGESFEKQPRCAFHTVRYDFKPASIDTSCEGNLEVGKGEQVTITLPNIEGSTPPVTVFKGSKRPYLKECILIINHDTGECRLEKLSSNITVKKTRVEGSSRIQYRLEQQQQQMWNLPRTSNLVQHSPSEEKMSPTSLMDDIERELKAEASLMDQMSSCDSSSDSKSSSSSSSEDSSSDSEDDDQFSPLGPRKYSSEHPSMSAGPQYRTSEADATCHRLQDHSTLLMSTLRSDLQLSESESDSED.

Positions 17–104 (LKLGESFEKQ…TGECRLEKLS (88 aa)) are necessary for interaction with ELL. 3 positions are modified to phosphoserine: Ser146, Ser151, and Ser154. The disordered stretch occupies residues 170–237 (MDQMSSCDSS…EADATCHRLQ (68 aa)). Positions 174 to 192 (SSCDSSSDSKSSSSSSSED) are enriched in low complexity. Residues 177–262 (DSSSDSKSSS…LSESESDSED (86 aa)) form a necessary for transactivation activity region. Over residues 193-202 (SSSDSEDDDQ) the composition is skewed to acidic residues. The segment covering 227–237 (SEADATCHRLQ) has biased composition (basic and acidic residues). The interval 248-262 (RSDLQLSESESDSED) is necessary for interaction with TCEA1 and transactivation activity.

This sequence belongs to the EAF family. In terms of assembly, component of the super elongation complex (SEC), at least composed of EAF1, EAF2, CDK9, MLLT3/AF9, AFF (AFF1 or AFF4), the P-TEFb complex and ELL (ELL, ELL2 or ELL3). Interacts with ELL and ELL2. Isoform 1 and isoform 2 interact with TCEA1. In terms of tissue distribution, isoform 1 is expressed in ovary, uterus, mammary glands, brain, spleen, liver, lung, thymus, kidney, skeletal muscle, skin and testis. Isoform 2 is expressed in kidney.

It localises to the nucleus speckle. Acts as a transcriptional transactivator of ELL and ELL2 elongation activities. Acts as a transcriptional transactivator of TCEA1 elongation activity. This is ELL-associated factor 2 (Eaf2) from Mus musculus (Mouse).